The sequence spans 489 residues: MAAAAVSRTLLPVAGRRLWGFTRRLPLRAAAAQPLYFGGDRLRSTQAAPQVVLNVPETQVTCLENGLRVASENSGISTCTVGLWIDAGSRYENEKNNGTAHFLEHMAFKGTKKRSQLDLELEIENMGAHLNAYTSREQTVYYAKAFSKDLPRAVEILADIIQNSTLGEAEIERERGVILREMQEVETNLQEVVFDYLHATAYQNTALGRTILGPTENIKSISRKDLVDYITTHYKGPRIVLAAAGGVCHNELLELAKFHFGDSLCAHKGDVPALPPCKFTGSEIRVRDDKMPLAHLAVAIEAVGWTHPDTICLMVANTLIGNWDRSFGGGMNLSSKLAQLTCHGNLCHSFQSFNTSYTDTGLWGLYMVCEQATVADMLHAVQKEWMRLCTAVSESEVARAKNLLKTNMLLQLDGSTPICEDIGRQMLCYNRRIPIPELEARIDAVDAEMVREVCTKYIYGKSPAIAALGPIERLPDFNQICSNMRWTRD.

A mitochondrion-targeting transit peptide spans 1 to 45 (MAAAAVSRTLLPVAGRRLWGFTRRLPLRAAAAQPLYFGGDRLRST). Zn(2+) is bound at residue His101. Residue Glu104 is the Proton acceptor of the active site. Residues His105 and Glu181 each coordinate Zn(2+).

This sequence belongs to the peptidase M16 family. As to quaternary structure, heterodimer of PMPCA (alpha) and PMPCB (beta) subunits, forming the mitochondrial processing protease (MPP) in which PMPCA is involved in substrate recognition and binding and PMPCB is the catalytic subunit. It depends on Zn(2+) as a cofactor.

Its subcellular location is the mitochondrion matrix. It carries out the reaction Release of N-terminal transit peptides from precursor proteins imported into the mitochondrion, typically with Arg in position P2.. Binding to PMPCA is required for catalytic activity. Its function is as follows. Catalytic subunit of the essential mitochondrial processing protease (MPP), which cleaves the mitochondrial sequence off newly imported precursors proteins. Preferentially, cleaves after an arginine at position P2. Required for PINK1 turnover by coupling PINK1 mitochondrial import and cleavage, which results in subsequent PINK1 proteolysis. The chain is Mitochondrial-processing peptidase subunit beta (Pmpcb) from Rattus norvegicus (Rat).